The sequence spans 297 residues: IMPACT family member C14C8.09c (297 aa).

Positions 225–255 form a coiled coil; the sequence is LRSELQEKNQKDKKKEVNKLEEKMTNAKEPN. Basic and acidic residues-rich tracts occupy residues 228–250 and 280–297; these read ELQEKNQKDKKKEVNKLEEKMTN and SVDHKEASKIIKDVEKEE. Residues 228 to 297 form a disordered region; it reads ELQEKNQKDK…KIIKDVEKEE (70 aa).

It belongs to the IMPACT family.

In Schizosaccharomyces pombe (strain 972 / ATCC 24843) (Fission yeast), this protein is IMPACT family member C14C8.09c.